The sequence spans 703 residues: Polyribonucleotide nucleotidyltransferase (703 aa).

Positions 486 and 492 each coordinate Mg(2+). Positions 553–614 (PRITTIWIKP…AACDAAIQMI (62 aa)) constitute a KH domain. An S1 motif domain is found at 624–692 (GKLYMGTVKK…KQGKIKLSRK (69 aa)).

Belongs to the polyribonucleotide nucleotidyltransferase family. Requires Mg(2+) as cofactor.

Its subcellular location is the cytoplasm. It catalyses the reaction RNA(n+1) + phosphate = RNA(n) + a ribonucleoside 5'-diphosphate. In terms of biological role, involved in mRNA degradation. Catalyzes the phosphorolysis of single-stranded polyribonucleotides processively in the 3'- to 5'-direction. This Trichlorobacter lovleyi (strain ATCC BAA-1151 / DSM 17278 / SZ) (Geobacter lovleyi) protein is Polyribonucleotide nucleotidyltransferase.